The chain runs to 88 residues: MKEGIHPDYRDVVFQDMSNDFKFITRSTIQTRETIEFEGASYPLVKIEVSSESHPFYTGKHKIVDTAGRVDKFRKKFGTVGSKTSVAE.

The protein belongs to the bacterial ribosomal protein bL31 family. Type B subfamily. As to quaternary structure, part of the 50S ribosomal subunit.

In Janthinobacterium sp. (strain Marseille) (Minibacterium massiliensis), this protein is Large ribosomal subunit protein bL31B.